The primary structure comprises 990 residues: Insulin-degrading enzyme (990 aa).

His-81 provides a ligand contact to Zn(2+). Glu-84 serves as the catalytic Proton acceptor. 2 residues coordinate Zn(2+): His-85 and Glu-162.

It belongs to the peptidase M16 family. Zn(2+) serves as cofactor.

It carries out the reaction Degradation of insulin, glucagon and other polypeptides. No action on proteins.. Its function is as follows. Can cleave insulin and TGF-alpha. The protein is Insulin-degrading enzyme (Ide) of Drosophila melanogaster (Fruit fly).